The primary structure comprises 870 residues: DNA mismatch repair protein MutS (870 aa).

Residue 620-627 participates in ATP binding; sequence GPNMAGKS.

Belongs to the DNA mismatch repair MutS family.

This protein is involved in the repair of mismatches in DNA. It is possible that it carries out the mismatch recognition step. This protein has a weak ATPase activity. The chain is DNA mismatch repair protein MutS from Syntrophotalea carbinolica (strain DSM 2380 / NBRC 103641 / GraBd1) (Pelobacter carbinolicus).